A 169-amino-acid polypeptide reads, in one-letter code: uncharacterized protein (169 aa).

In terms of domain architecture, N-acetyltransferase spans 4–160 (IEVKRLLVNY…EGVKEQLSED (157 aa)).

This is an uncharacterized protein from Halalkalibacterium halodurans (strain ATCC BAA-125 / DSM 18197 / FERM 7344 / JCM 9153 / C-125) (Bacillus halodurans).